The chain runs to 575 residues: Amino-acid acetyltransferase, mitochondrial (575 aa).

A mitochondrion-targeting transit peptide spans 1–35 (MSKLRNLNRQFISNLKTHETVTNAKRNLILSILKS). In terms of domain architecture, N-acetyltransferase spans 398-557 (FTLNNLVQDG…QGIPGGVNIH (160 aa)).

This sequence belongs to the acetyltransferase family.

It is found in the mitochondrion. The catalysed reaction is L-glutamate + acetyl-CoA = N-acetyl-L-glutamate + CoA + H(+). Its pathway is amino-acid biosynthesis; L-arginine biosynthesis; N(2)-acetyl-L-ornithine from L-glutamate: step 1/4. Its function is as follows. N-acetylglutamate synthase involved in arginine biosynthesis. This is Amino-acid acetyltransferase, mitochondrial (ARG2) from Debaryomyces hansenii (strain ATCC 36239 / CBS 767 / BCRC 21394 / JCM 1990 / NBRC 0083 / IGC 2968) (Yeast).